Here is a 321-residue protein sequence, read N- to C-terminus: Lipoyl synthase (321 aa).

Positions 68, 73, 79, 94, 98, 101, and 308 each coordinate [4Fe-4S] cluster. The region spanning Phe80–Ser297 is the Radical SAM core domain.

Belongs to the radical SAM superfamily. Lipoyl synthase family. The cofactor is [4Fe-4S] cluster.

Its subcellular location is the cytoplasm. The catalysed reaction is [[Fe-S] cluster scaffold protein carrying a second [4Fe-4S](2+) cluster] + N(6)-octanoyl-L-lysyl-[protein] + 2 oxidized [2Fe-2S]-[ferredoxin] + 2 S-adenosyl-L-methionine + 4 H(+) = [[Fe-S] cluster scaffold protein] + N(6)-[(R)-dihydrolipoyl]-L-lysyl-[protein] + 4 Fe(3+) + 2 hydrogen sulfide + 2 5'-deoxyadenosine + 2 L-methionine + 2 reduced [2Fe-2S]-[ferredoxin]. It functions in the pathway protein modification; protein lipoylation via endogenous pathway; protein N(6)-(lipoyl)lysine from octanoyl-[acyl-carrier-protein]: step 2/2. Functionally, catalyzes the radical-mediated insertion of two sulfur atoms into the C-6 and C-8 positions of the octanoyl moiety bound to the lipoyl domains of lipoate-dependent enzymes, thereby converting the octanoylated domains into lipoylated derivatives. In Aeromonas hydrophila subsp. hydrophila (strain ATCC 7966 / DSM 30187 / BCRC 13018 / CCUG 14551 / JCM 1027 / KCTC 2358 / NCIMB 9240 / NCTC 8049), this protein is Lipoyl synthase.